A 702-amino-acid chain; its full sequence is Methionine--tRNA ligase (702 aa).

The short motif at Pro-14–His-24 is the 'HIGH' region element. Zn(2+)-binding residues include Cys-146, Cys-149, Cys-159, and Cys-162. Positions Lys-344–Ser-348 match the 'KMSKS' region motif. ATP is bound at residue Lys-347. Positions Asp-601–Gln-702 constitute a tRNA-binding domain.

It belongs to the class-I aminoacyl-tRNA synthetase family. MetG type 1 subfamily. In terms of assembly, homodimer. Zn(2+) serves as cofactor.

The protein localises to the cytoplasm. It catalyses the reaction tRNA(Met) + L-methionine + ATP = L-methionyl-tRNA(Met) + AMP + diphosphate. In terms of biological role, is required not only for elongation of protein synthesis but also for the initiation of all mRNA translation through initiator tRNA(fMet) aminoacylation. The protein is Methionine--tRNA ligase of Chlorobium luteolum (strain DSM 273 / BCRC 81028 / 2530) (Pelodictyon luteolum).